A 268-amino-acid polypeptide reads, in one-letter code: Proliferating cell nuclear antigen (268 aa).

Residues 61 to 80 (RCDRNPSMGMNLNNMAKMLK) mediate DNA binding.

This sequence belongs to the PCNA family.

Its subcellular location is the nucleus. In terms of biological role, this protein is an auxiliary protein of DNA polymerase delta and is involved in the control of eukaryotic DNA replication by increasing the polymerase's processibility during elongation of the leading strand. The polypeptide is Proliferating cell nuclear antigen (Catharanthus roseus (Madagascar periwinkle)).